Here is a 346-residue protein sequence, read N- to C-terminus: NADH-cytochrome b5 reductase 2 (346 aa).

The chain crosses the membrane as a helical span at residues 28–50 (GGSNAALYAGLAAAAGAGAYYFL). The 106-residue stretch at 95–200 (QGFISLKLDS…KGPIPKYPWS (106 aa)) folds into the FAD-binding FR-type domain. 203-238 (KHDHIALIAGGTGITPMYQLARAIFNNPADKTKVTL) contributes to the FAD binding site.

The protein belongs to the flavoprotein pyridine nucleotide cytochrome reductase family. FAD serves as cofactor.

Its subcellular location is the mitochondrion outer membrane. The enzyme catalyses 2 Fe(III)-[cytochrome b5] + NADH = 2 Fe(II)-[cytochrome b5] + NAD(+) + H(+). May mediate the reduction of outer membrane cytochrome b5. The polypeptide is NADH-cytochrome b5 reductase 2 (mcr1) (Botryotinia fuckeliana (strain B05.10) (Noble rot fungus)).